Here is an 827-residue protein sequence, read N- to C-terminus: Periplasmic nitrate reductase (827 aa).

The tat-type signal signal peptide spans 1–32 (MNLSRRDFMKANAALAAASVAGLIIPVKNVNA). Residues 37 to 93 (ITWDKAVCRFCGTGCAVLVGTKDGRVVASQGDPDAEVNRGLNCIKGYFLPKIMYGKD) form the 4Fe-4S Mo/W bis-MGD-type domain. Residues C44, C47, C51, and C79 each coordinate [4Fe-4S] cluster. Mo-bis(molybdopterin guanine dinucleotide)-binding positions include K81, Q148, N173, C177, 210 to 217 (WGSNMAEM), 242 to 246 (STFEH), 261 to 263 (QSD), M372, Q376, N482, 508 to 509 (SD), K531, D558, and 717 to 726 (TGRILEHWHT). Position 793 (F793) interacts with substrate. 2 residues coordinate Mo-bis(molybdopterin guanine dinucleotide): N801 and K818.

It belongs to the prokaryotic molybdopterin-containing oxidoreductase family. NasA/NapA/NarB subfamily. As to quaternary structure, component of the periplasmic nitrate reductase NapAB complex composed of NapA and NapB. It depends on [4Fe-4S] cluster as a cofactor. Mo-bis(molybdopterin guanine dinucleotide) is required as a cofactor. Predicted to be exported by the Tat system. The position of the signal peptide cleavage has not been experimentally proven.

It localises to the periplasm. It carries out the reaction 2 Fe(II)-[cytochrome] + nitrate + 2 H(+) = 2 Fe(III)-[cytochrome] + nitrite + H2O. Functionally, catalytic subunit of the periplasmic nitrate reductase complex NapAB. Receives electrons from NapB and catalyzes the reduction of nitrate to nitrite. This Histophilus somni (strain 129Pt) (Haemophilus somnus) protein is Periplasmic nitrate reductase.